Here is a 310-residue protein sequence, read N- to C-terminus: Ribosomal RNA small subunit methyltransferase H (310 aa).

S-adenosyl-L-methionine contacts are provided by residues 33–35, Asp52, Phe79, Asp98, and Gln105; that span reads GGH.

The protein belongs to the methyltransferase superfamily. RsmH family.

It localises to the cytoplasm. The catalysed reaction is cytidine(1402) in 16S rRNA + S-adenosyl-L-methionine = N(4)-methylcytidine(1402) in 16S rRNA + S-adenosyl-L-homocysteine + H(+). Specifically methylates the N4 position of cytidine in position 1402 (C1402) of 16S rRNA. The protein is Ribosomal RNA small subunit methyltransferase H of Campylobacter jejuni subsp. jejuni serotype O:23/36 (strain 81-176).